A 172-amino-acid polypeptide reads, in one-letter code: Large ribosomal subunit protein uL10 (172 aa).

This sequence belongs to the universal ribosomal protein uL10 family. As to quaternary structure, part of the ribosomal stalk of the 50S ribosomal subunit. The N-terminus interacts with L11 and the large rRNA to form the base of the stalk. The C-terminus forms an elongated spine to which L12 dimers bind in a sequential fashion forming a multimeric L10(L12)X complex.

Forms part of the ribosomal stalk, playing a central role in the interaction of the ribosome with GTP-bound translation factors. The protein is Large ribosomal subunit protein uL10 of Pelodictyon phaeoclathratiforme (strain DSM 5477 / BU-1).